Reading from the N-terminus, the 287-residue chain is uncharacterized protein (287 aa).

Helical transmembrane passes span 4-24 (TTNGWINGFIGVLIFSGSLPA), 36-56 (FLTVCRAAIAGVLAGGLLLIF), 66-86 (LISLLVVAFGVVIGFPLLTAL), 93-113 (SAHAIVFIGLLPLATAVFGVL), 122-142 (VFWIFSAAGSLLVAGFALIQG), 148-168 (LGDAYMLASIVVCGLGYAEGA), 179-199 (VISWALVLSLPLMLPLSFFFT), 208-228 (VPALLSLAYVSLFSMLIGFVF), 237-259 (GIAAVGQLQLLQPFFGLLLASVI), and 264-286 (VGWALVAVNIAVIMCVAAARRFA). 2 consecutive EamA domains span residues 16 to 139 (LIFS…GFAL) and 158 to 284 (VVCG…AARR).

Belongs to the EamA transporter family.

The protein localises to the cell membrane. This is an uncharacterized protein from Bacillus subtilis (strain 168).